A 118-amino-acid polypeptide reads, in one-letter code: Large ribosomal subunit protein bL17 (118 aa).

The protein belongs to the bacterial ribosomal protein bL17 family. As to quaternary structure, part of the 50S ribosomal subunit. Contacts protein L32.

The polypeptide is Large ribosomal subunit protein bL17 (Campylobacter hominis (strain ATCC BAA-381 / DSM 21671 / CCUG 45161 / LMG 19568 / NCTC 13146 / CH001A)).